We begin with the raw amino-acid sequence, 125 residues long: Photosystem II extrinsic protein U (125 aa).

The first 29 residues, M1 to A29, serve as a signal peptide directing secretion.

The protein belongs to the PsbU family. As to quaternary structure, PSII is composed of 1 copy each of membrane proteins PsbA, PsbB, PsbC, PsbD, PsbE, PsbF, PsbH, PsbI, PsbJ, PsbK, PsbL, PsbM, PsbT, PsbX, PsbY, PsbZ, Psb30/Ycf12, peripheral proteins PsbO, CyanoQ (PsbQ), PsbU, PsbV and a large number of cofactors. It forms dimeric complexes.

It localises to the cellular thylakoid membrane. Its function is as follows. One of the extrinsic, lumenal subunits of photosystem II (PSII). PSII is a light-driven water plastoquinone oxidoreductase, using light energy to abstract electrons from H(2)O, generating a proton gradient subsequently used for ATP formation. The extrinsic proteins stabilize the structure of photosystem II oxygen-evolving complex (OEC), the ion environment of oxygen evolution and protect the OEC against heat-induced inactivation. This chain is Photosystem II extrinsic protein U, found in Synechococcus sp. (strain WH7803).